The chain runs to 445 residues: GTPase Der (445 aa).

EngA-type G domains lie at 3 to 167 and 180 to 353; these read PVIA…NLPD and IKLA…ASAN. GTP-binding positions include 9–16, 56–60, 119–122, 186–193, 233–237, and 298–301; these read GRPNVGKS, DTGGF, NKAE, DTAGL, and NKWD. The 85-residue stretch at 354-438 folds into the KH-like domain; that stretch reads RKMSTPVLTR…PLRIQLKSSV (85 aa).

This sequence belongs to the TRAFAC class TrmE-Era-EngA-EngB-Septin-like GTPase superfamily. EngA (Der) GTPase family. Associates with the 50S ribosomal subunit.

In terms of biological role, GTPase that plays an essential role in the late steps of ribosome biogenesis. The chain is GTPase Der from Polaromonas naphthalenivorans (strain CJ2).